The sequence spans 332 residues: 2,3-diketo-L-gulonate reductase (332 aa).

His44 serves as the catalytic Proton donor. Residues 168–174, 224–225, and 304–306 contribute to the NAD(+) site; these read ITMVDMS, WK, and GHE.

It belongs to the LDH2/MDH2 oxidoreductase family. DlgD subfamily. As to quaternary structure, homodimer.

It localises to the cytoplasm. The catalysed reaction is 3-dehydro-L-gulonate + NAD(+) = 2,3-dioxo-L-gulonate + NADH + H(+). It catalyses the reaction 3-dehydro-L-gulonate + NADP(+) = 2,3-dioxo-L-gulonate + NADPH + H(+). Its function is as follows. Catalyzes the reduction of 2,3-diketo-L-gulonate in the presence of NADH, to form 3-keto-L-gulonate. This Mannheimia succiniciproducens (strain KCTC 0769BP / MBEL55E) protein is 2,3-diketo-L-gulonate reductase.